The following is a 263-amino-acid chain: MRDSTPLIHPTAVIDPSATLADDVRVGAFSLIGADVQIGAGTEVGPHCSIHGPTRIGRNNRFIGHAAIGGEPQDKKYAGERTELVIGDGNVIREFVTINRGTGGGGGVTVVGNDNWMLAYTHVAHDCHVGNHCVFSNNTTLAGHVTVGDYVIISGFAGAHQFCRIGAHAFLGMGALTNGDVPPFTMVGSDSLGRPRGINSEGLKRRGFDAERITAIKRAYRTLYVAGLPLADAKLQLAEQAKSSEDVRGMLEFIEAAERPLLR.

The protein belongs to the transferase hexapeptide repeat family. LpxA subfamily. As to quaternary structure, homotrimer.

The protein resides in the cytoplasm. The catalysed reaction is a (3R)-hydroxyacyl-[ACP] + UDP-N-acetyl-alpha-D-glucosamine = a UDP-3-O-[(3R)-3-hydroxyacyl]-N-acetyl-alpha-D-glucosamine + holo-[ACP]. It functions in the pathway glycolipid biosynthesis; lipid IV(A) biosynthesis; lipid IV(A) from (3R)-3-hydroxytetradecanoyl-[acyl-carrier-protein] and UDP-N-acetyl-alpha-D-glucosamine: step 1/6. Functionally, involved in the biosynthesis of lipid A, a phosphorylated glycolipid that anchors the lipopolysaccharide to the outer membrane of the cell. This Xanthomonas euvesicatoria pv. vesicatoria (strain 85-10) (Xanthomonas campestris pv. vesicatoria) protein is Acyl-[acyl-carrier-protein]--UDP-N-acetylglucosamine O-acyltransferase.